A 63-amino-acid polypeptide reads, in one-letter code: Putative flagellar calcium-binding protein (63 aa).

Residues 1-11 show a composition bias toward polar residues; the sequence is MGCISSKSTQT. Residues 1 to 23 are disordered; that stretch reads MGCISSKSTQTGKKEGKTAAERK. The span at 12–23 shows a compositional bias: basic and acidic residues; that stretch reads GKKEGKTAAERK. The 24-residue stretch at 40–63 folds into the EF-hand domain; it reads EDKARRIELFKKFDKNNTGKLSME. The Ca(2+) site is built by Asp-53, Asn-55, Thr-57, and Lys-59.

This sequence belongs to the calflagin family.

Its subcellular location is the cell projection. The protein resides in the cilium. It is found in the flagellum. The polypeptide is Putative flagellar calcium-binding protein (CABP) (Crithidia fasciculata).